The following is a 291-amino-acid chain: Transcription factor TYE7 (291 aa).

Positions 89-109 (FPTDQFFSNPSSYSHSPEVSS) are disordered. Residues 96 to 109 (SNPSSYSHSPEVSS) are compositionally biased toward low complexity. Ser-104 carries the phosphoserine modification. In terms of domain architecture, bHLH spans 180–265 (FQKQAHNKIE…EKAVDYILYL (86 aa)). DNA is bound by residues His-185, Glu-189, and Arg-193. The segment at 221-245 (DSVKKQDEDGAETAATTPLPSAAAT) is disordered. Low complexity predominate over residues 233–245 (TAATTPLPSAAAT). Thr-237 carries the phosphothreonine modification.

Homodimer. Efficient DNA binding requires dimerization with another bHLH protein.

The protein localises to the nucleus. Transcriptional activator of glycolytic gene expression, such as enolase genes (ENO1 and ENO2), glyceraldehyde-3-phosphate dehydrogenase gene (TDH), phosphoglycerate kinase (PGK1), phosphoglycerate mutase (PGM1), pyruvate kinase (PYK1) and triosephosphate isomerase (TPI1) genes. Binds DNA on E-box motifs: 5'-CANNTG-3'. In response to adenylic nucleotide reduction, activates Ty1 mRNA transcription, possibly by controlling Ty1 antisense transcription. Acts as a cell cycle transcription factor. Its function may also be linked to sulfur metabolism and the cross-regulation between phosphate and sulfate metabolism. The sequence is that of Transcription factor TYE7 from Saccharomyces cerevisiae (strain ATCC 204508 / S288c) (Baker's yeast).